The chain runs to 412 residues: DnaJ homolog subfamily A member 2 (412 aa).

Positions 8–70 (KLYDILGVPP…EKRELYDRYG (63 aa)) constitute a J domain. K39 is modified (N6-acetyllysine). A phosphoserine mark is found at S78 and S123. The CR-type zinc finger occupies 130–214 (GKTTKLQLSK…CEGKKVIKEV (85 aa)). K134 is covalently cross-linked (Glycyl lysine isopeptide (Lys-Gly) (interchain with G-Cter in SUMO2)). Residues C143 and C146 each contribute to the Zn(2+) site. A CXXCXGXG motif repeat occupies 143–150 (CSACSGQG). At K152 the chain carries N6-acetyllysine. Zn(2+)-binding residues include C159, C162, C186, C189, C202, and C205. CXXCXGXG motif repeat units lie at residues 159-166 (CSACRGRG), 186-193 (CSDCNGEG), and 202-209 (CKKCEGKK). Residues 359–412 (PEVPNIIGDTEEVELQEFDSTRGSGGGQRREAYNDSSDEESSSHHGPGVQCAHQ) form a disordered region. The residue at position 391 (Y391) is a Phosphotyrosine. A phosphoserine mark is found at S394 and S395. The residue at position 409 (C409) is a Cysteine methyl ester. Residue C409 is the site of S-farnesyl cysteine attachment. Residues 410-412 (AHQ) constitute a propeptide, removed in mature form.

The protein resides in the membrane. Functionally, co-chaperone of Hsc70. Stimulates ATP hydrolysis and the folding of unfolded proteins mediated by HSPA1A/B (in vitro). The chain is DnaJ homolog subfamily A member 2 (DNAJA2) from Bos taurus (Bovine).